The following is a 513-amino-acid chain: Alanine--glyoxylate aminotransferase 2, mitochondrial (513 aa).

The transit peptide at 1 to 40 (MSLAWRNLQKPFYLETSLRILQMRPSLSLGASRIAVPKLT) directs the protein to the mitochondrion. Lys56 bears the N6-acetyllysine mark. N6-acetyllysine; alternate is present on Lys70. Lys70 carries the N6-succinyllysine; alternate modification. The residue at position 83 (Lys83) is an N6-acetyllysine. At Lys261 the chain carries N6-acetyllysine; alternate. Lys261 is subject to N6-succinyllysine; alternate. Lys303 is subject to N6-succinyllysine. Position 349 is an N6-(pyridoxal phosphate)lysine (Lys349). N6-acetyllysine; alternate is present on residues Lys416 and Lys419. Lys416 and Lys419 each carry N6-succinyllysine; alternate. At Lys453 the chain carries N6-acetyllysine.

The protein belongs to the class-III pyridoxal-phosphate-dependent aminotransferase family. In terms of assembly, homotetramer. It depends on pyridoxal 5'-phosphate as a cofactor. Expressed in the liver and kidney.

The protein resides in the mitochondrion. The enzyme catalyses glyoxylate + L-alanine = glycine + pyruvate. It carries out the reaction (R)-3-amino-2-methylpropanoate + pyruvate = 2-methyl-3-oxopropanoate + L-alanine. It catalyses the reaction 3-oxopropanoate + L-alanine = beta-alanine + pyruvate. The catalysed reaction is 2-oxobutanoate + L-alanine = (2S)-2-aminobutanoate + pyruvate. The enzyme catalyses N(omega),N(omega)-dimethyl-L-arginine + pyruvate = 5-(3,3-dimethylguanidino)-2-oxopentanoate + L-alanine. It carries out the reaction N(omega),N('omega)-dimethyl-L-arginine + pyruvate = 5-(3,3'-dimethylguanidino)-2-oxopentanoate + L-alanine. It catalyses the reaction N(omega),N(omega)-dimethyl-L-arginine + glyoxylate = 5-(3,3-dimethylguanidino)-2-oxopentanoate + glycine. The catalysed reaction is N(omega),N('omega)-dimethyl-L-arginine + glyoxylate = 5-(3,3'-dimethylguanidino)-2-oxopentanoate + glycine. The enzyme catalyses N(omega)-methyl-L-arginine + pyruvate = 5-(3-methylguanidino)-2-oxopentanoate + L-alanine. It carries out the reaction N(omega)-methyl-L-arginine + glyoxylate = 5-(3-methylguanidino)-2-oxopentanoate + glycine. It catalyses the reaction L-ornithine + pyruvate = 5-amino-2-oxopentanoate + L-alanine. The catalysed reaction is L-ornithine + glyoxylate = 5-amino-2-oxopentanoate + glycine. The enzyme catalyses (2S)-2-aminobutanoate + glyoxylate = 2-oxobutanoate + glycine. It carries out the reaction N(omega),N(omega)-dimethyl-L-arginine + oxaloacetate = 5-(3,3-dimethylguanidino)-2-oxopentanoate + L-aspartate. It catalyses the reaction oxaloacetate + L-alanine = L-aspartate + pyruvate. The catalysed reaction is N(omega),N(omega)-dimethyl-L-arginine + 2-oxobutanoate = 5-(3,3-dimethylguanidino)-2-oxopentanoate + (2S)-2-aminobutanoate. The enzyme catalyses 2-oxopentanoate + N(omega),N(omega)-dimethyl-L-arginine = 5-(3,3-dimethylguanidino)-2-oxopentanoate + L-2-aminopentanoate. It carries out the reaction 2-oxohexanoate + N(omega),N(omega)-dimethyl-L-arginine = L-2-aminohexanoate + 5-(3,3-dimethylguanidino)-2-oxopentanoate. With respect to regulation, (R)-3-amino-2-methylpropionate--pyruvate transaminase and beta-alanine-pyruvate aminotransferase are inhibited by aminooxyacetic acid. Functionally, multifunctional aminotransferase with a broad substrate specificity. Catalyzes the conversion of glyoxylate to glycine using alanine as the amino donor. Catalyzes metabolism of not L- but the D-isomer of D-beta-aminoisobutyric acid to generate 2-methyl-3-oxopropanoate and alanine. Catalyzes the transfer of the amino group from beta-alanine to pyruvate to yield L-alanine and 3-oxopropanoate. Can metabolize NG-monomethyl-L-arginine (NMMA), asymmetric NG,NG-dimethyl-L-arginine (ADMA) and symmetric NG,N'G-dimethyl-L-arginine (SDMA). ADMA is a potent inhibitor of nitric-oxide (NO) synthase, and this activity provides mechanism through which the kidney regulates blood pressure. The polypeptide is Alanine--glyoxylate aminotransferase 2, mitochondrial (Agxt2) (Mus musculus (Mouse)).